The chain runs to 455 residues: Bifunctional protein GlmU (455 aa).

The tract at residues 1-226 is pyrophosphorylase; sequence MSLEIVILAA…AMEVQGANDR (226 aa). UDP-N-acetyl-alpha-D-glucosamine-binding positions include 8–11, Lys-22, Gln-73, 78–79, 99–101, Gly-136, Glu-151, Asn-166, and Asn-224; these read LAAG, GT, and YGD. A Mg(2+)-binding site is contributed by Asp-101. Asn-224 contacts Mg(2+). Residues 227-247 are linker; the sequence is KQLAELERHYQLRAGRRLMAQ. Residues 248–455 are N-acetyltransferase; that stretch reads GVTLRDPARF…WKRPEKIKKD (208 aa). UDP-N-acetyl-alpha-D-glucosamine is bound by residues Arg-330 and Lys-348. The active-site Proton acceptor is His-360. The UDP-N-acetyl-alpha-D-glucosamine site is built by Tyr-363 and Asn-374. Acetyl-CoA is bound by residues Ala-377, 383 to 384, Ser-402, Ala-420, and Arg-437; that span reads NY.

In the N-terminal section; belongs to the N-acetylglucosamine-1-phosphate uridyltransferase family. It in the C-terminal section; belongs to the transferase hexapeptide repeat family. As to quaternary structure, homotrimer. Mg(2+) serves as cofactor.

It localises to the cytoplasm. The enzyme catalyses alpha-D-glucosamine 1-phosphate + acetyl-CoA = N-acetyl-alpha-D-glucosamine 1-phosphate + CoA + H(+). It carries out the reaction N-acetyl-alpha-D-glucosamine 1-phosphate + UTP + H(+) = UDP-N-acetyl-alpha-D-glucosamine + diphosphate. Its pathway is nucleotide-sugar biosynthesis; UDP-N-acetyl-alpha-D-glucosamine biosynthesis; N-acetyl-alpha-D-glucosamine 1-phosphate from alpha-D-glucosamine 6-phosphate (route II): step 2/2. The protein operates within nucleotide-sugar biosynthesis; UDP-N-acetyl-alpha-D-glucosamine biosynthesis; UDP-N-acetyl-alpha-D-glucosamine from N-acetyl-alpha-D-glucosamine 1-phosphate: step 1/1. It participates in bacterial outer membrane biogenesis; LPS lipid A biosynthesis. In terms of biological role, catalyzes the last two sequential reactions in the de novo biosynthetic pathway for UDP-N-acetylglucosamine (UDP-GlcNAc). The C-terminal domain catalyzes the transfer of acetyl group from acetyl coenzyme A to glucosamine-1-phosphate (GlcN-1-P) to produce N-acetylglucosamine-1-phosphate (GlcNAc-1-P), which is converted into UDP-GlcNAc by the transfer of uridine 5-monophosphate (from uridine 5-triphosphate), a reaction catalyzed by the N-terminal domain. This Pseudomonas fluorescens (strain ATCC BAA-477 / NRRL B-23932 / Pf-5) protein is Bifunctional protein GlmU.